The sequence spans 156 residues: Cytochrome c-type biogenesis protein CcmE 1 (156 aa).

Over 1-8 (MNATRRQR) the chain is Cytoplasmic. Residues 9 to 29 (LWWVICVLTAAALAVTLIVFA) traverse the membrane as a helical; Signal-anchor for type II membrane protein segment. Residues 30–156 (LQRNMSYLFT…ATATPLTAPR (127 aa)) are Periplasmic-facing. Residues His-123 and Tyr-127 each contribute to the heme site. The tract at residues 137–156 (AEGHAGKPIPATATPLTAPR) is disordered. Residues 146–156 (PATATPLTAPR) show a composition bias toward low complexity.

This sequence belongs to the CcmE/CycJ family.

It is found in the cell inner membrane. Functionally, heme chaperone required for the biogenesis of c-type cytochromes. Transiently binds heme delivered by CcmC and transfers the heme to apo-cytochromes in a process facilitated by CcmF and CcmH. This chain is Cytochrome c-type biogenesis protein CcmE 1, found in Xanthomonas euvesicatoria pv. vesicatoria (strain 85-10) (Xanthomonas campestris pv. vesicatoria).